A 207-amino-acid chain; its full sequence is LexA repressor (207 aa).

Positions 28–48 form a DNA-binding region, H-T-H motif; that stretch reads VREIGEAVGLASSSTVHGHLA. Catalysis depends on for autocatalytic cleavage activity residues Ser129 and Lys167.

It belongs to the peptidase S24 family. As to quaternary structure, homodimer.

It catalyses the reaction Hydrolysis of Ala-|-Gly bond in repressor LexA.. Represses a number of genes involved in the response to DNA damage (SOS response), including recA and lexA. In the presence of single-stranded DNA, RecA interacts with LexA causing an autocatalytic cleavage which disrupts the DNA-binding part of LexA, leading to derepression of the SOS regulon and eventually DNA repair. This Geobacillus thermodenitrificans (strain NG80-2) protein is LexA repressor.